Here is a 70-residue protein sequence, read N- to C-terminus: Enhancer of split m6 protein (70 aa).

This is Enhancer of split m6 protein from Drosophila melanogaster (Fruit fly).